A 178-amino-acid polypeptide reads, in one-letter code: Large ribosomal subunit protein uL6 (178 aa).

This sequence belongs to the universal ribosomal protein uL6 family. Part of the 50S ribosomal subunit.

In terms of biological role, this protein binds to the 23S rRNA, and is important in its secondary structure. It is located near the subunit interface in the base of the L7/L12 stalk, and near the tRNA binding site of the peptidyltransferase center. This is Large ribosomal subunit protein uL6 from Tropheryma whipplei (strain TW08/27) (Whipple's bacillus).